The chain runs to 112 residues: Protein new-glue 2 (112 aa).

A signal peptide spans 1 to 24 (MKITVVLVLLATFLGCVMIHESEA). Positions 24 to 69 (ASTTTTSTSASATTTTSASATTTTSASATTTTSASATTTTASPSSS) are enriched in low complexity. Residues 24–112 (ASTTTTSTSA…RSSRNRRSEE (89 aa)) form a disordered region. Repeat copies occupy residues 31–38 (TSASATTT), 39–46 (TSASATTT), 47–54 (TSASATTT), and 55–62 (TSASATTT). Residues 31–62 (TSASATTTTSASATTTTSASATTTTSASATTT) form a 4 X 8 AA tandem repeats of T-S-A-S-A-T-T-T region. Residues 70–112 (SKKKTVTHYKRKVKRPKKVRKITRRRGLRSRNGRSSRNRRSEE) are compositionally biased toward basic residues.

This sequence to NG-1, also to SGS-3. In terms of tissue distribution, salivary gland specific.

The protein resides in the secreted. The chain is Protein new-glue 2 (ng2) from Drosophila melanogaster (Fruit fly).